The sequence spans 318 residues: Probable metal transport system membrane protein CT_070 (318 aa).

The next 10 membrane-spanning stretches (helical) occupy residues 1-21, 39-59, 64-84, 94-114, 124-144, 170-190, 196-216, 226-246, 252-272, and 285-305; these read MVAS…LVFF, IQVI…TFLV, AMYA…VCLF, QALT…IHFI, ASTA…LVFL, IFLV…SFVC, IFAF…MLLL, AVGV…AKLI, EMMV…PALS, and TSGL…VFVC.

Belongs to the ABC-3 integral membrane protein family.

It localises to the cell inner membrane. Its function is as follows. Part of an ATP-driven transport system CT_067/CT_068/CT_069/CT_070 for a metal. The sequence is that of Probable metal transport system membrane protein CT_070 from Chlamydia trachomatis serovar D (strain ATCC VR-885 / DSM 19411 / UW-3/Cx).